The sequence spans 404 residues: Cysteine desulfurase IscS (404 aa).

Residues 75 to 76 (AT), Asn-155, Gln-183, and 203 to 205 (SAH) each bind pyridoxal 5'-phosphate. At Lys-206 the chain carries N6-(pyridoxal phosphate)lysine. Thr-243 lines the pyridoxal 5'-phosphate pocket. Cys-328 acts as the Cysteine persulfide intermediate in catalysis. A [2Fe-2S] cluster-binding site is contributed by Cys-328.

It belongs to the class-V pyridoxal-phosphate-dependent aminotransferase family. NifS/IscS subfamily. Homodimer. Forms a heterotetramer with IscU, interacts with other sulfur acceptors. The cofactor is pyridoxal 5'-phosphate.

The protein resides in the cytoplasm. It carries out the reaction (sulfur carrier)-H + L-cysteine = (sulfur carrier)-SH + L-alanine. Its pathway is cofactor biosynthesis; iron-sulfur cluster biosynthesis. Its function is as follows. Master enzyme that delivers sulfur to a number of partners involved in Fe-S cluster assembly, tRNA modification or cofactor biosynthesis. Catalyzes the removal of elemental sulfur atoms from cysteine to produce alanine. Functions as a sulfur delivery protein for Fe-S cluster synthesis onto IscU, an Fe-S scaffold assembly protein, as well as other S acceptor proteins. The protein is Cysteine desulfurase IscS of Pseudomonas aeruginosa (strain UCBPP-PA14).